A 114-amino-acid chain; its full sequence is Iron-sulfur cluster insertion protein ErpA (114 aa).

Iron-sulfur cluster is bound by residues C42, C106, and C108.

The protein belongs to the HesB/IscA family. In terms of assembly, homodimer. Iron-sulfur cluster serves as cofactor.

Functionally, required for insertion of 4Fe-4S clusters for at least IspG. The sequence is that of Iron-sulfur cluster insertion protein ErpA from Pasteurella multocida (strain Pm70).